A 335-amino-acid polypeptide reads, in one-letter code: Methionine import ATP-binding protein MetN 1 (335 aa).

The ABC transporter domain maps to 2 to 242 (IEFQQVHKTY…PQHPTTKRFV (241 aa)). 38–45 (GHSGAGKS) contributes to the ATP binding site.

The protein belongs to the ABC transporter superfamily. Methionine importer (TC 3.A.1.24) family. In terms of assembly, the complex is composed of two ATP-binding proteins (MetN), two transmembrane proteins (MetI) and a solute-binding protein (MetQ).

Its subcellular location is the cell inner membrane. The catalysed reaction is L-methionine(out) + ATP + H2O = L-methionine(in) + ADP + phosphate + H(+). It carries out the reaction D-methionine(out) + ATP + H2O = D-methionine(in) + ADP + phosphate + H(+). Its function is as follows. Part of the ABC transporter complex MetNIQ involved in methionine import. Responsible for energy coupling to the transport system. The sequence is that of Methionine import ATP-binding protein MetN 1 from Pseudomonas putida (strain ATCC 47054 / DSM 6125 / CFBP 8728 / NCIMB 11950 / KT2440).